The sequence spans 145 residues: Protein SprT-like (145 aa).

One can recognise a SprT-like domain in the interval 4-140 (TNYVQEVSLA…VCGNCHGKLM (137 aa)). Position 64 (His-64) interacts with Zn(2+). Glu-65 is a catalytic residue. His-68 provides a ligand contact to Zn(2+).

The protein belongs to the SprT family. Zn(2+) serves as cofactor.

Its subcellular location is the cytoplasm. The protein is Protein SprT-like of Streptococcus pyogenes serotype M1.